The chain runs to 369 residues: UDP-N-acetylglucosamine--N-acetylmuramyl-(pentapeptide) pyrophosphoryl-undecaprenol N-acetylglucosamine transferase (369 aa).

UDP-N-acetyl-alpha-D-glucosamine-binding positions include 10-12 (TGG), Asn124, Ser195, Ile252, and Gln297.

The protein belongs to the glycosyltransferase 28 family. MurG subfamily.

The protein resides in the cell membrane. The enzyme catalyses Mur2Ac(oyl-L-Ala-gamma-D-Glu-L-Lys-D-Ala-D-Ala)-di-trans,octa-cis-undecaprenyl diphosphate + UDP-N-acetyl-alpha-D-glucosamine = beta-D-GlcNAc-(1-&gt;4)-Mur2Ac(oyl-L-Ala-gamma-D-Glu-L-Lys-D-Ala-D-Ala)-di-trans,octa-cis-undecaprenyl diphosphate + UDP + H(+). Its pathway is cell wall biogenesis; peptidoglycan biosynthesis. Its function is as follows. Cell wall formation. Catalyzes the transfer of a GlcNAc subunit on undecaprenyl-pyrophosphoryl-MurNAc-pentapeptide (lipid intermediate I) to form undecaprenyl-pyrophosphoryl-MurNAc-(pentapeptide)GlcNAc (lipid intermediate II). The chain is UDP-N-acetylglucosamine--N-acetylmuramyl-(pentapeptide) pyrophosphoryl-undecaprenol N-acetylglucosamine transferase from Leuconostoc citreum (strain KM20).